A 591-amino-acid polypeptide reads, in one-letter code: Zinc finger protein 48 (591 aa).

M1 carries the N-acetylmethionine modification. Disordered regions lie at residues 1 to 24 and 55 to 80; these read MEAS…IKEE and GLGK…GSND. Basic and acidic residues-rich tracts occupy residues 8–24 and 55–65; these read EFEH…IKEE and GLGKRQPRDPV. S12 bears the Phosphoserine mark. A Glycyl lysine isopeptide (Lys-Gly) (interchain with G-Cter in SUMO2) cross-link involves residue K58. C2H2-type zinc fingers lie at residues 83–105 and 111–133; these read AVCG…QRTH and YKCG…QRTH. The interval 131-160 is disordered; it reads RTHTGEKAYRVRPPAPGPPKMPRSRIPAGE. K150 is covalently cross-linked (Glycyl lysine isopeptide (Lys-Gly) (interchain with G-Cter in SUMO2)). 2 consecutive C2H2-type zinc fingers follow at residues 163 to 185 and 191 to 213; these read TICG…QRTH and YKCG…QRTH. A disordered region spans residues 206–241; that stretch reads RIKHQRTHRGDQLPRPVVPRRQPSPAAPAAPHRPKA. The segment covering 224–235 has biased composition (low complexity); sequence PRRQPSPAAPAA. K240 participates in a covalent cross-link: Glycyl lysine isopeptide (Lys-Gly) (interchain with G-Cter in SUMO2). 2 C2H2-type zinc fingers span residues 246 to 268 and 274 to 296; these read YICT…QRSH and FGCD…LRVH. K300 is covalently cross-linked (Glycyl lysine isopeptide (Lys-Gly) (interchain with G-Cter in SUMO2)). 2 C2H2-type zinc fingers span residues 302–324 and 330–352; these read YLCP…LRTH and HACP…RLTH. The interval 372–429 is disordered; it reads PPPPPLGTSPSLTPRSPSHSSDGPFGLPGLEPEPGGPQAGEPPPPLAGDKPHKCPECG. Low complexity predominate over residues 379–404; it reads TSPSLTPRSPSHSSDGPFGLPGLEPE. The C2H2-type 9 zinc-finger motif lies at 423–445; it reads HKCPECGKGFRRSSDLVKHHRVH. K449 participates in a covalent cross-link: Glycyl lysine isopeptide (Lys-Gly) (interchain with G-Cter in SUMO2). The C2H2-type 10 zinc finger occupies 451-473; that stretch reads YLCPECGKGFADSSARVKHLRTH. The interval 464–512 is disordered; the sequence is SARVKHLRTHQGERTRPPPPPSTLLRPHNPPGSVPIVPQSRVQGRPSGP. Residues 480–496 show a composition bias toward pro residues; the sequence is PPPPPSTLLRPHNPPGS. 2 consecutive C2H2-type zinc fingers follow at residues 516-538 and 544-566; these read HVCG…RRTH and YKCA…QRGH. Residues 564–591 are disordered; sequence RGHLALKPFGVGDGPPRPLKEESPAGLE. Positions 581 to 591 are enriched in basic and acidic residues; the sequence is PLKEESPAGLE. K583 participates in a covalent cross-link: Glycyl lysine isopeptide (Lys-Gly) (interchain with G-Cter in SUMO2).

It belongs to the krueppel C2H2-type zinc-finger protein family.

Its subcellular location is the nucleus. May be involved in transcriptional regulation. The protein is Zinc finger protein 48 (Znf48) of Mus musculus (Mouse).